We begin with the raw amino-acid sequence, 1032 residues long: Argonaute protein hrde-1 (1032 aa).

Disordered regions lie at residues 1–51 (MADL…PIGR) and 298–375 (KLSE…YSPS). The segment at 1 to 551 (MADLLDKIMG…IQMTAKLLPP (551 aa)) is required to recruit the small-RNA amplification machinery to gene targets and promote gene silencing. Over residues 18-33 (PKRDNRMNQDKDEPTS) the composition is skewed to basic and acidic residues. Positions 303-313 (KGGGGGRGGYG) are enriched in gly residues. Composition is skewed to basic and acidic residues over residues 315 to 335 (SDSRDSRGGYRGGRSDSRDFR) and 343 to 364 (GNDRYRDESRGRRDMYDSRRDS). Positions 376-481 (DAAELEHAFG…FPMELLRIAP (106 aa)) constitute a PAZ domain. Residues 650 to 977 (DILVGIAREK…LAKRGRNNYK (328 aa)) enclose the Piwi domain.

It belongs to the argonaute family. WAGO subfamily. Expressed in the nuclei of male and female germ cells.

It localises to the cytoplasm. The protein localises to the cytoplasmic ribonucleoprotein granule. It is found in the nucleus. Argonaute protein which is involved in the endogenous small interfering RNA (endo-siRNA) pathway and is required for RNA-mediated gene silencing (RNAi) in the germline. Interacts with secondary 22G-RNAs in an hrde-2-dependent manner; 22G-RNAs are RNA-dependent RNA polymerase-derived endo-siRNAs, typically 22 nucleotides in length with a 5'-guanosine residue. Plays a key role in transgenerational epigenetic inheritance and germline immortality. May be involved in transgenerational gene silencing both by inducing subnuclear-co-localization of target genes into heterochromatin and by activation of small RNA amplification in the nuage. The protein is Argonaute protein hrde-1 of Caenorhabditis elegans.